A 384-amino-acid polypeptide reads, in one-letter code: MTVTLGMPAAPARPLGTRRHSRQINVGNVPVGGDAPVSVQSMCTTLTSDVNATLQQIAQLTASGCQIVRVAVPSQDDADALAAIARKSPIPVIADIHFQPKYVFAAIDAGCAAVRVNPGNIKAFDDKVGEIARAAKGAGIPIRIGVNAGSLDKRLLAKYGKATPEALTESALWECSLFEEHDFRDIKISVKHHDPVVMIQAYRLLAQSCDYPLHLGVTEAGPAFQGTVKSSVAFGALLAEGIGDTIRVSLSAPPVEEVKVGTAILESLGLRQRKLEIVSCPSCGRAQVDVYTLANQVSAGLEGMEVPLRVAVMGCVVNGPGEAREADLGVASGNGKGQIFVKGEVVKTVPEAQIVETLIEEAMRLAEEMTADGTPSGEPSVTVS.

The [4Fe-4S] cluster site is built by Cys-280, Cys-283, Cys-315, and Glu-322.

The protein belongs to the IspG family. Requires [4Fe-4S] cluster as cofactor.

The enzyme catalyses (2E)-4-hydroxy-3-methylbut-2-enyl diphosphate + oxidized [flavodoxin] + H2O + 2 H(+) = 2-C-methyl-D-erythritol 2,4-cyclic diphosphate + reduced [flavodoxin]. Its pathway is isoprenoid biosynthesis; isopentenyl diphosphate biosynthesis via DXP pathway; isopentenyl diphosphate from 1-deoxy-D-xylulose 5-phosphate: step 5/6. Functionally, converts 2C-methyl-D-erythritol 2,4-cyclodiphosphate (ME-2,4cPP) into 1-hydroxy-2-methyl-2-(E)-butenyl 4-diphosphate. The chain is 4-hydroxy-3-methylbut-2-en-1-yl diphosphate synthase (flavodoxin) from Frankia alni (strain DSM 45986 / CECT 9034 / ACN14a).